Reading from the N-terminus, the 519-residue chain is Protein twist (519 aa).

Disordered stretches follow at residues 53 to 77 (MQQQ…QQQY), 131 to 156 (NFEQ…VATA), 301 to 321 (YEAY…SDRD), and 368 to 389 (FRKP…DEFS). Composition is skewed to low complexity over residues 54-76 (QQQQ…QQQQ) and 134-146 (QQQQ…QQQQ). Over residues 308 to 317 (NSLNGSTYSS) the composition is skewed to polar residues. Residues 368–379 (FRKPRRRLKRKP) show a composition bias toward basic residues. The region spanning 390-441 (NQRVMANVRERQRTQSLNDAFKALQQIIPTLPSDKLSKIQTLKLATRYIDFL) is the bHLH domain.

As to quaternary structure, efficient DNA binding requires dimerization with another bHLH protein. Homodimer.

The protein localises to the nucleus. In terms of biological role, involved in the establishment and dorsoventral patterning of germ layers in the embryo. The polypeptide is Protein twist (Drosophila virilis (Fruit fly)).